A 102-amino-acid polypeptide reads, in one-letter code: Small ribosomal subunit protein uS10 (102 aa).

This sequence belongs to the universal ribosomal protein uS10 family. Part of the 30S ribosomal subunit.

Functionally, involved in the binding of tRNA to the ribosomes. In Coprothermobacter proteolyticus (strain ATCC 35245 / DSM 5265 / OCM 4 / BT), this protein is Small ribosomal subunit protein uS10.